Reading from the N-terminus, the 431-residue chain is uncharacterized protein (431 aa).

4 helical membrane passes run 228–248 (GLLSIPLTSSIIIYGFIHYLS), 279–299 (IGLPKIILYSNLATFCYNFTF), 349–369 (ILWPFVGKCTGGLLLNAFLWI), and 388–408 (MIFNIIGCGTAAIGWSSLKLY).

Its subcellular location is the membrane. This is an uncharacterized protein from Saccharomyces cerevisiae (strain ATCC 204508 / S288c) (Baker's yeast).